Consider the following 345-residue polypeptide: Isocitrate lyase (345 aa).

Serine 58–tyrosine 60 contributes to the substrate binding site. Aspartate 98 contributes to the Mg(2+) binding site. The active-site Proton acceptor is cysteine 135. Residues glycine 136 to histidine 137, arginine 170, asparagine 230 to serine 234, and threonine 260 contribute to the substrate site. Positions aspartate 318–aspartate 345 are disordered. Acidic residues predominate over residues serine 328–aspartate 345.

In terms of assembly, homotetramer or homotrimer. The cofactor is Mg(2+).

It catalyses the reaction D-threo-isocitrate = glyoxylate + succinate. Its pathway is carbohydrate metabolism; glyoxylate cycle; (S)-malate from isocitrate: step 1/2. Its function is as follows. Involved in the metabolic adaptation in response to environmental changes. Catalyzes the reversible formation of succinate and glyoxylate from isocitrate, a key step of the glyoxylate cycle, which operates as an anaplerotic route for replenishing the tricarboxylic acid cycle during growth on fatty acid substrates. The chain is Isocitrate lyase (aceA) from Haloferax volcanii (strain ATCC 29605 / DSM 3757 / JCM 8879 / NBRC 14742 / NCIMB 2012 / VKM B-1768 / DS2) (Halobacterium volcanii).